The following is a 129-amino-acid chain: Glycine cleavage system H protein (129 aa).

The region spanning 24 to 106 is the Lipoyl-binding domain; sequence AVRIGLSAYA…HGEGWLLVIQ (83 aa). Position 65 is an N6-lipoyllysine (lysine 65).

It belongs to the GcvH family. In terms of assembly, the glycine cleavage system is composed of four proteins: P, T, L and H. (R)-lipoate is required as a cofactor.

In terms of biological role, the glycine cleavage system catalyzes the degradation of glycine. The H protein shuttles the methylamine group of glycine from the P protein to the T protein. The protein is Glycine cleavage system H protein of Synechococcus sp. (strain WH7803).